The following is a 1336-amino-acid chain: pre-mRNA 3' end processing protein WDR33 (1336 aa).

Residue A2 is modified to N-acetylalanine. Position 7 is a phosphoserine (S7). K46 is modified (N6-acetyllysine). 7 WD repeats span residues 117–156, 159–198, 200–239, 242–283, 286–325, 329–369, and 373–412; these read KVKC…FETI, AHDS…VKMF, AHKE…EERI, GHGA…SLAT, AHKN…EELQ, GHKK…EVGG, and AHEG…DKMR. Glycyl lysine isopeptide (Lys-Gly) (interchain with G-Cter in SUMO2) cross-links involve residues K526, K530, and K560. A disordered region spans residues 568-1336; it reads QVEQIQPPPS…GASRGGGRGR (769 aa). Residues 573 to 590 show a composition bias toward pro residues; it reads QPPPSSGTPLLGPQPFPG. Positions 594-607 are enriched in polar residues; that stretch reads MSQIPQGFQQPHPS. Positions 608–643 are enriched in low complexity; it reads QQMPMNMAQMGPPGPQGQFRPPGPQGQMGPQGPPLH. Residues 618–770 enclose the Collagen-like domain; the sequence is GPPGPQGQFR…GPGSQGIQGP (153 aa). The segment covering 683-695 has biased composition (pro residues); it reads PHGPLGPQGPPGP. Low complexity-rich tracts occupy residues 696-707 and 726-751; these read QGSSGPQGHMGP and QGHL…GMQG. An Omega-N-methylarginine modification is found at R782. Positions 854–869 are enriched in low complexity; it reads GPPGSQSQQGPPQGSL. R915 carries the post-translational modification Asymmetric dimethylarginine. Over residues 932–941 the composition is skewed to low complexity; it reads PGLGQQGAQG. Basic and acidic residues-rich tracts occupy residues 971-989 and 998-1034; these read SERR…ERGP and GPPD…EFEG. R987 is subject to Omega-N-methylarginine. R1035 carries the post-translational modification Omega-N-methylarginine. Composition is skewed to basic and acidic residues over residues 1056 to 1068 and 1078 to 1122; these read PDHR…DGRG and EGRR…RGRD. Positions 1130–1140 are enriched in acidic residues; sequence FGPEENFDASE. Residues 1141 to 1150 show a composition bias toward basic and acidic residues; the sequence is EAARGRDLRG. The span at 1151 to 1160 shows a compositional bias: basic residues; that stretch reads RGRGTPRGGR. Composition is skewed to basic and acidic residues over residues 1169–1217 and 1242–1259; these read EFPR…RERS and SEHR…DRGG. Position 1210 is a phosphoserine (S1210). Residue R1262 is modified to Omega-N-methylarginine. A compositionally biased stretch (basic and acidic residues) spans 1281–1293; that stretch reads DGEHHDGYHRDEP. The span at 1301–1326 shows a compositional bias: low complexity; the sequence is GTPSRGGRSGSNWGRGSNMNSGPPRR. Asymmetric dimethylarginine; alternate is present on R1315. R1315 carries the omega-N-methylarginine; alternate modification.

This sequence belongs to the WD repeat WDR33 family. As to quaternary structure, component of the cleavage and polyadenylation specificity factor (CPSF) module of the pre-mRNA 3'-end processing complex. Interacts with CPSF3/CPSF73. In terms of tissue distribution, most highly expressed in testis.

Its subcellular location is the nucleus. Its function is as follows. Essential for both cleavage and polyadenylation of pre-mRNA 3' ends. This Homo sapiens (Human) protein is pre-mRNA 3' end processing protein WDR33 (WDR33).